The chain runs to 279 residues: Phosphate import ATP-binding protein PstB (279 aa).

One can recognise an ABC transporter domain in the interval 33-274; that stretch reads LDINKLNLFY…PLKKKTEDYI (242 aa). 65-72 lines the ATP pocket; sequence GPSGCGKS.

Belongs to the ABC transporter superfamily. Phosphate importer (TC 3.A.1.7) family. In terms of assembly, the complex is composed of two ATP-binding proteins (PstB), two transmembrane proteins (PstC and PstA) and a solute-binding protein (PstS).

The protein resides in the cell inner membrane. The enzyme catalyses phosphate(out) + ATP + H2O = ADP + 2 phosphate(in) + H(+). In terms of biological role, part of the ABC transporter complex PstSACB involved in phosphate import. Responsible for energy coupling to the transport system. The polypeptide is Phosphate import ATP-binding protein PstB (Colwellia psychrerythraea (strain 34H / ATCC BAA-681) (Vibrio psychroerythus)).